The sequence spans 192 residues: MKNLFRPLIVIFAVLTAVTGLAYPAVMTAVGQAAFSDQANGSMLEQDGKVVGSKLIGQQFDAPQYFWGRLSATSPMPYNAQGSGGSNLGPTNPALLDEIKGRIDALKTAGTDMSKPVPVDLVTSSGSGLDPEISPAAAAYQIERVAKARKLAANDVQALVDRYTSGRQFGILGEPRVNVLQLNLALDEMKHG.

The helical transmembrane segment at 7 to 27 threads the bilayer; sequence PLIVIFAVLTAVTGLAYPAVM.

Belongs to the KdpC family. The system is composed of three essential subunits: KdpA, KdpB and KdpC.

It is found in the cell inner membrane. In terms of biological role, part of the high-affinity ATP-driven potassium transport (or Kdp) system, which catalyzes the hydrolysis of ATP coupled with the electrogenic transport of potassium into the cytoplasm. This subunit acts as a catalytic chaperone that increases the ATP-binding affinity of the ATP-hydrolyzing subunit KdpB by the formation of a transient KdpB/KdpC/ATP ternary complex. The polypeptide is Potassium-transporting ATPase KdpC subunit (Paraburkholderia phytofirmans (strain DSM 17436 / LMG 22146 / PsJN) (Burkholderia phytofirmans)).